We begin with the raw amino-acid sequence, 184 residues long: Protein DESIGUAL 3 (184 aa).

The first 24 residues, 1-24, serve as a signal peptide directing secretion; the sequence is MESELGFLVSVVIICADITATVLG. The span at 34-45 shows a compositional bias: basic residues; the sequence is APHHHHQQHSRH. The interval 34–53 is disordered; sequence APHHHHQQHSRHSGSGCRRS. The next 3 membrane-spanning stretches (helical) occupy residues 62–82, 99–119, and 140–160; these read GVAA…LGGC, ILAV…YSTL, and FFLI…AYYV. An N-linked (GlcNAc...) asparagine glycan is attached at N180.

The protein belongs to the DESIGUAL family. As to expression, mainly expressed in roots, inflorescences and developing leaves, and, at low levels, in mature leaves.

It is found in the endoplasmic reticulum membrane. Involved, partially redundantly with VCC/DEAL1 and DEAL2, to ensure bilateral symmetry development and early leaf margin patterning, probably via the regulation of auxin and CUC2 distribution. This is Protein DESIGUAL 3 from Arabidopsis thaliana (Mouse-ear cress).